We begin with the raw amino-acid sequence, 429 residues long: Ribosomal RNA small subunit methyltransferase B (429 aa).

Residues 254-260, aspartate 277, aspartate 303, and aspartate 322 each bind S-adenosyl-L-methionine; that span reads CAAPGGK. Cysteine 375 (nucleophile) is an active-site residue. Positions 397–419 are disordered; sequence ALSETGTPDQPGQQNLPGGEEGD. Positions 400–412 are enriched in polar residues; that stretch reads ETGTPDQPGQQNL.

It belongs to the class I-like SAM-binding methyltransferase superfamily. RsmB/NOP family.

The protein resides in the cytoplasm. It carries out the reaction cytidine(967) in 16S rRNA + S-adenosyl-L-methionine = 5-methylcytidine(967) in 16S rRNA + S-adenosyl-L-homocysteine + H(+). Its function is as follows. Specifically methylates the cytosine at position 967 (m5C967) of 16S rRNA. The sequence is that of Ribosomal RNA small subunit methyltransferase B from Salmonella paratyphi B (strain ATCC BAA-1250 / SPB7).